Here is a 276-residue protein sequence, read N- to C-terminus: Rhomboid protease GlpG (276 aa).

Transmembrane regions (helical) follow at residues 94–114 (GPVT…MSLI), 142–162 (IFMH…WYLG), 169–189 (LGSG…GYVQ), 192–212 (FSGP…GYVW), 229–249 (LIIF…GMSM), and 250–270 (ANGA…VDTL). Residue serine 201 is the Nucleophile of the active site. The active site involves histidine 254.

It belongs to the peptidase S54 family.

Its subcellular location is the cell inner membrane. The catalysed reaction is Cleaves type-1 transmembrane domains using a catalytic dyad composed of serine and histidine that are contributed by different transmembrane domains.. Functionally, rhomboid-type serine protease that catalyzes intramembrane proteolysis. This Salmonella agona (strain SL483) protein is Rhomboid protease GlpG.